The primary structure comprises 369 residues: tRNA/tmRNA (uracil-C(5))-methyltransferase (369 aa).

Residues glutamine 190, tyrosine 218, asparagine 223, glutamate 239, and aspartate 301 each coordinate S-adenosyl-L-methionine. The active-site Nucleophile is the cysteine 326. Residue glutamate 360 is the Proton acceptor of the active site.

Belongs to the class I-like SAM-binding methyltransferase superfamily. RNA M5U methyltransferase family. TrmA subfamily.

It catalyses the reaction uridine(54) in tRNA + S-adenosyl-L-methionine = 5-methyluridine(54) in tRNA + S-adenosyl-L-homocysteine + H(+). The enzyme catalyses uridine(341) in tmRNA + S-adenosyl-L-methionine = 5-methyluridine(341) in tmRNA + S-adenosyl-L-homocysteine + H(+). Its function is as follows. Dual-specificity methyltransferase that catalyzes the formation of 5-methyluridine at position 54 (m5U54) in all tRNAs, and that of position 341 (m5U341) in tmRNA (transfer-mRNA). In Vibrio atlanticus (strain LGP32) (Vibrio splendidus (strain Mel32)), this protein is tRNA/tmRNA (uracil-C(5))-methyltransferase.